Reading from the N-terminus, the 88-residue chain is uncharacterized protein (88 aa).

An N-terminal signal peptide occupies residues 1–23; the sequence is MAVSGLRLTIVWGLLVLILTCQA. A compositionally biased stretch (basic and acidic residues) spans 25–40; it reads DKPEGKPDEQPHDSGK. Residues 25–45 are disordered; sequence DKPEGKPDEQPHDSGKNSEPA.

The protein resides in the secreted. This is an uncharacterized protein from Bos taurus (Bovine).